We begin with the raw amino-acid sequence, 198 residues long: Protein GrpE (198 aa).

Residues Met-1 to Glu-18 are compositionally biased toward basic and acidic residues. A disordered region spans residues Met-1–Phe-33.

It belongs to the GrpE family. As to quaternary structure, homodimer.

It localises to the cytoplasm. Its function is as follows. Participates actively in the response to hyperosmotic and heat shock by preventing the aggregation of stress-denatured proteins, in association with DnaK and GrpE. It is the nucleotide exchange factor for DnaK and may function as a thermosensor. Unfolded proteins bind initially to DnaJ; upon interaction with the DnaJ-bound protein, DnaK hydrolyzes its bound ATP, resulting in the formation of a stable complex. GrpE releases ADP from DnaK; ATP binding to DnaK triggers the release of the substrate protein, thus completing the reaction cycle. Several rounds of ATP-dependent interactions between DnaJ, DnaK and GrpE are required for fully efficient folding. The sequence is that of Protein GrpE from Haemophilus influenzae (strain ATCC 51907 / DSM 11121 / KW20 / Rd).